The following is a 57-amino-acid chain: UPF0509 protein YciZ (57 aa).

The protein belongs to the UPF0509 family.

This chain is UPF0509 protein YciZ, found in Escherichia coli O127:H6 (strain E2348/69 / EPEC).